Reading from the N-terminus, the 79-residue chain is Small ribosomal subunit protein eS17 (79 aa).

This sequence belongs to the eukaryotic ribosomal protein eS17 family.

The polypeptide is Small ribosomal subunit protein eS17 (Saccharolobus islandicus (strain Y.N.15.51 / Yellowstone #2) (Sulfolobus islandicus)).